Reading from the N-terminus, the 369-residue chain is C-C chemokine receptor type 9 (369 aa).

Residues 1-48 are Extracellular-facing; sequence MMPTELTSLIPGMFDDFSYDSTASTDDYMNLNFSSFFCKKNNVRQFAS. Residue Asn-32 is glycosylated (N-linked (GlcNAc...) asparagine). Intrachain disulfides connect Cys-38–Cys-289 and Cys-119–Cys-198. The chain crosses the membrane as a helical span at residues 49–74; that stretch reads HFLPPLYWLVFIVGTLGNSLVILVYW. Residues 75 to 85 are Cytoplasmic-facing; sequence YCTRVKTMTDM. The chain crosses the membrane as a helical span at residues 86–109; sequence FLLNLAIADLLFLATLPFWAIAAA. Residues 110–120 lie on the Extracellular side of the membrane; the sequence is GQWMFQTFMCK. The chain crosses the membrane as a helical span at residues 121-150; that stretch reads VVNSMYKMNFYSCVLLIMCISVDRYIAIVQ. At 151-159 the chain is on the cytoplasmic side; sequence AMKAQVWRQ. A helical transmembrane segment spans residues 160–185; that stretch reads KRLLYSKMVCITIWVMAAVLCTPEIL. The Extracellular segment spans residues 186–208; sequence YSQVSGESGIATCTMVYPKDKNA. The helical transmembrane segment at 209-243 threads the bilayer; it reads KLKSAVLILKVTLGFFLPFMVMAFCYTIIIHTLVQ. At 244–248 the chain is on the cytoplasmic side; sequence AKKSS. Residues 249-283 traverse the membrane as a helical segment; the sequence is KHKALKVTITVLTVFIMSQFPYNSILVVQAVDAYA. The Extracellular portion of the chain corresponds to 284–290; it reads MFISNCT. A helical transmembrane segment spans residues 291–321; the sequence is ISTNIDICFQVTQTIAFFHSCLNPVLYVFVG. Residues 322–369 lie on the Cytoplasmic side of the membrane; that stretch reads ERFRRDLVKTLKNLGCISQAQWVSFTRREGSLKLSSMLLETTSGALSL.

It belongs to the G-protein coupled receptor 1 family. As to expression, highly expressed in the thymus and low in lymph nodes and spleen.

Its subcellular location is the cell membrane. Its function is as follows. Receptor for chemokine SCYA25/TECK. Subsequently transduces a signal by increasing the intracellular calcium ions level. This is C-C chemokine receptor type 9 (Ccr9) from Mus musculus (Mouse).